A 352-amino-acid chain; its full sequence is MAIDENKQKALAAALGQIEKQFGKGSIMRLGEDRSMDVETISTGSLSLDIALGAGGLPMGRVVEIYGPESSGKTTLTLQVIASAQREGKTCAFIDAEHALDPVYARKLGVDIDNLLCSQPDTGEQALEICDALARSGAVDVIVVDSVAALTPKAEIEGEIGDSHMGLAARMMSQAMRKLAGNLKQSNTLLIFINQIRMKIGVMFGNPETTTGGNALKFYASVRLDIRRIGAVKDGDNVIGSETRVKVVKNKIAAPFKQAEFQILYGEGINFFGELVDLGVKEKLIEKAGAWYSYNGEKIGQGKANAISWLKENPAAAKEIEKKVRELLLNNEDSKPDFVVDAADAEETNPDF.

67 to 74 (GPESSGKT) contacts ATP.

It belongs to the RecA family.

It is found in the cytoplasm. In terms of biological role, can catalyze the hydrolysis of ATP in the presence of single-stranded DNA, the ATP-dependent uptake of single-stranded DNA by duplex DNA, and the ATP-dependent hybridization of homologous single-stranded DNAs. It interacts with LexA causing its activation and leading to its autocatalytic cleavage. This chain is Protein RecA, found in Enterobacter sp. (strain 638).